Consider the following 204-residue polypeptide: Leucyl/phenylalanyl-tRNA--protein transferase (204 aa).

This sequence belongs to the L/F-transferase family.

Its subcellular location is the cytoplasm. The enzyme catalyses N-terminal L-lysyl-[protein] + L-leucyl-tRNA(Leu) = N-terminal L-leucyl-L-lysyl-[protein] + tRNA(Leu) + H(+). The catalysed reaction is N-terminal L-arginyl-[protein] + L-leucyl-tRNA(Leu) = N-terminal L-leucyl-L-arginyl-[protein] + tRNA(Leu) + H(+). It carries out the reaction L-phenylalanyl-tRNA(Phe) + an N-terminal L-alpha-aminoacyl-[protein] = an N-terminal L-phenylalanyl-L-alpha-aminoacyl-[protein] + tRNA(Phe). In terms of biological role, functions in the N-end rule pathway of protein degradation where it conjugates Leu, Phe and, less efficiently, Met from aminoacyl-tRNAs to the N-termini of proteins containing an N-terminal arginine or lysine. The chain is Leucyl/phenylalanyl-tRNA--protein transferase from Rhizobium johnstonii (strain DSM 114642 / LMG 32736 / 3841) (Rhizobium leguminosarum bv. viciae).